The following is a 630-amino-acid chain: L-amino-acid oxidase (630 aa).

The N-terminal stretch at 1–21 is a signal peptide; it reads MAGLALRLVLAATLLGLAGSL. Residues Cys35 and Cys198 are joined by a disulfide bond. N-linked (GlcNAc...) asparagine glycosylation occurs at Asn53. FAD-binding positions include 68–69, 88–89, Arg96, and 112–115; these read VA, EA, and GAMR. Arg115 contacts substrate. N-linked (GlcNAc...) asparagine glycans are attached at residues Asn133 and Asn219. Position 286 (Val286) interacts with FAD. Tyr395 lines the substrate pocket. FAD-binding positions include Glu479 and 486-491; that span reads GWVETA. 486–487 is a binding site for substrate; that stretch reads GW. Residues 532 to 554 are disordered; that stretch reads GERPEEQQAREEVSPDEQEPSHK.

This sequence belongs to the flavin monoamine oxidase family. FIG1 subfamily. FAD is required as a cofactor. In terms of tissue distribution, primarily found in immune tissues. Primarily found in immune tissues, mostly in B-lymphocytes. As to expression, restricted to the testis, predominantly in Sertoli cells at the periphery of the ducts, and the brain, including Purkinje cells, hippocampus and mitral cells in the olfactory bulb. No isoform 2 expression in fetal tissues.

It localises to the secreted. Its subcellular location is the cytoplasmic vesicle. The protein resides in the secretory vesicle. It is found in the acrosome. The protein localises to the lysosome. The catalysed reaction is an L-alpha-amino acid + O2 + H2O = a 2-oxocarboxylate + H2O2 + NH4(+). It catalyses the reaction L-tryptophan + O2 + H2O = indole-3-pyruvate + H2O2 + NH4(+). The enzyme catalyses L-phenylalanine + O2 + H2O = 3-phenylpyruvate + H2O2 + NH4(+). It carries out the reaction L-tyrosine + O2 + H2O = 3-(4-hydroxyphenyl)pyruvate + H2O2 + NH4(+). The catalysed reaction is L-arginine + O2 + H2O = 5-guanidino-2-oxopentanoate + H2O2 + NH4(+). It functions in the pathway amino-acid degradation; L-tryptophan degradation via pyruvate pathway. Its function is as follows. Secreted L-amino-acid oxidase that acts as a key immunoregulator. Has preference for L-aromatic amino acids: converts phenylalanine (Phe), tyrosine (Tyr) and tryptophan (Trp) to phenylpyruvic acid (PP), hydroxyphenylpyruvic acid (HPP), and indole-3-pyruvic acid (I3P), respectively. Also has weak L-arginine oxidase activity. Acts as a negative regulator of anti-tumor immunity by mediating Trp degradation via an indole pyruvate pathway that activates the transcription factor AHR. IL4I1-mediated Trp catabolism generates I3P, giving rise to indole metabolites (indole-3-acetic acid (IAA) and indole-3-aldehyde (I3A)) and kynurenic acid, which act as ligands for AHR, a ligand-activated transcription factor that plays important roles in immunity and cancer. AHR activation by indoles following IL4I1-mediated Trp degradation enhances tumor progression by promoting cancer cell motility and suppressing adaptive immunity. Also has an immunoregulatory function in some immune cell, probably by mediating Trp degradation and promoting downstream AHR activation: inhibits T-cell activation and proliferation, promotes the differentiation of naive CD4(+) T-cells into FOXP3(+) regulatory T-cells (Treg) and regulates the development and function of B-cells. Also regulates M2 macrophage polarization by inhibiting T-cell activation. Also has antibacterial properties by inhibiting growth of Gram negative and Gram positive bacteria through the production of NH4(+) and H2O2. The sequence is that of L-amino-acid oxidase from Mus musculus (Mouse).